Consider the following 937-residue polypeptide: C-1-tetrahydrofolate synthase, cytoplasmic (937 aa).

The tract at residues methionine 1–proline 309 is methylenetetrahydrofolate dehydrogenase and cyclohydrolase. Substrate-binding positions include tyrosine 50–lysine 54 and valine 97–leucine 99. Residues glycine 168–serine 170 and serine 193 contribute to the NADP(+) site. Substrate is bound at residue proline 268 to glycine 272. The interval valine 310–serine 937 is formyltetrahydrofolate synthetase. An ATP-binding site is contributed by threonine 374 to serine 381.

The protein in the N-terminal section; belongs to the tetrahydrofolate dehydrogenase/cyclohydrolase family. In the C-terminal section; belongs to the formate--tetrahydrofolate ligase family. In terms of assembly, homodimer.

Its subcellular location is the cytoplasm. It carries out the reaction (6R)-5,10-methylene-5,6,7,8-tetrahydrofolate + NADP(+) = (6R)-5,10-methenyltetrahydrofolate + NADPH. The catalysed reaction is (6R)-5,10-methenyltetrahydrofolate + H2O = (6R)-10-formyltetrahydrofolate + H(+). The enzyme catalyses (6S)-5,6,7,8-tetrahydrofolate + formate + ATP = (6R)-10-formyltetrahydrofolate + ADP + phosphate. The protein operates within one-carbon metabolism; tetrahydrofolate interconversion. The polypeptide is C-1-tetrahydrofolate synthase, cytoplasmic (Schizosaccharomyces pombe (strain 972 / ATCC 24843) (Fission yeast)).